The chain runs to 543 residues: Carboxypeptidase Y homolog A (543 aa).

A signal peptide spans 1 to 17 (MRVLPATLLVGAATAAV). Positions 18–124 (PPFQQILGLP…KLEAYDLRVK (107 aa)) are excised as a propeptide. Intrachain disulfides connect Cys179–Cys419, Cys313–Cys327, Cys337–Cys360, Cys344–Cys353, and Cys382–Cys389. Asn210 carries an N-linked (GlcNAc...) asparagine glycan. Residue Ser266 is part of the active site. The active site involves Asp458. A glycan (N-linked (GlcNAc...) asparagine) is linked at Asn509. His520 is an active-site residue.

Belongs to the peptidase S10 family.

It is found in the vacuole. The enzyme catalyses Release of a C-terminal amino acid with broad specificity.. Its function is as follows. Vacuolar carboxypeptidase involved in degradation of small peptides. Digests preferentially peptides containing an aliphatic or hydrophobic residue in P1' position, as well as methionine, leucine or phenylalanine in P1 position of ester substrate. This chain is Carboxypeptidase Y homolog A (cpyA), found in Aspergillus clavatus (strain ATCC 1007 / CBS 513.65 / DSM 816 / NCTC 3887 / NRRL 1 / QM 1276 / 107).